A 308-amino-acid chain; its full sequence is 1-acyl-sn-glycerol-3-phosphate acyltransferase (308 aa).

3 helical membrane passes run 65–85 (FLSM…LLPW), 124–144 (AIYI…WLIP), and 148–168 (VTIA…YVLA). Positions 130 to 135 (HASLVD) match the HXXXXD motif motif.

Belongs to the 1-acyl-sn-glycerol-3-phosphate acyltransferase family.

It localises to the membrane. It catalyses the reaction a 1-acyl-sn-glycero-3-phosphate + an acyl-CoA = a 1,2-diacyl-sn-glycero-3-phosphate + CoA. In terms of biological role, converts lysophosphatidic acid (LPA) into phosphatidic acid by incorporating acyl moiety at the 2 position. This enzyme shows a preference for medium-chain-length fatty acyl-coenzyme a substrates. This Cocos nucifera (Coconut palm) protein is 1-acyl-sn-glycerol-3-phosphate acyltransferase.